We begin with the raw amino-acid sequence, 246 residues long: MEGGSASGSASALSNDENLVVSCEDSSSPIGNELELGLTLSLGRKGYRDCRVYADDSSSSSSSSSLSRASVIAGIKRTADSMAATSGQVVGWPPIRTYRMNSMVNQAKASATEDPNLEISQAVNKNRSDSTKMRNSMFVKVTMDGIPIGRKIDLNAHKCYESLSNTLEEMFLKPKLGSRTLETDGHMETPVKILPDGSSGLVLTYEDKEGDWMLVGDVPWGMFIGSVRRLRIMKTSEATGKAQMIL.

The short motif at 36–40 (LGLTL) is the EAR-like (transcriptional repression) element. The region spanning 136-235 (SMFVKVTMDG…SVRRLRIMKT (100 aa)) is the PB1 domain.

The protein belongs to the Aux/IAA family. As to quaternary structure, homodimers and heterodimers. Interacts with TPL. Preferentially expressed in stems and flowers.

The protein localises to the nucleus. Functionally, aux/IAA proteins are short-lived transcriptional factors that function as repressors of early auxin response genes at low auxin concentrations. Repression is thought to result from the interaction with auxin response factors (ARFs), proteins that bind to the auxin-responsive promoter element (AuxRE). Formation of heterodimers with ARF proteins may alter their ability to modulate early auxin response genes expression. The sequence is that of Auxin-responsive protein IAA11 (IAA11) from Arabidopsis thaliana (Mouse-ear cress).